The sequence spans 122 residues: Large ribosomal subunit protein uL14 (122 aa).

It belongs to the universal ribosomal protein uL14 family. In terms of assembly, part of the 50S ribosomal subunit. Forms a cluster with proteins L3 and L19. In the 70S ribosome, L14 and L19 interact and together make contacts with the 16S rRNA in bridges B5 and B8.

Its function is as follows. Binds to 23S rRNA. Forms part of two intersubunit bridges in the 70S ribosome. The protein is Large ribosomal subunit protein uL14 of Desulfatibacillum aliphaticivorans.